Consider the following 138-residue polypeptide: Augmin complex subunit msd1 (138 aa).

Component of the augmin complex composed of dgt2, dgt3, dgt4, dgt5, dgt6, msd1, msd5 and wac. The complex interacts directly or indirectly with microtubules and is required for centrosome-independent generation of spindle microtubules.

The protein resides in the cytoplasm. The protein localises to the cytoskeleton. It localises to the spindle. As part of the augmin complex, plays a role in centrosome-independent generation of spindle microtubules. The complex is required for mitotic spindle assembly through its involvement in localizing gamma-tubulin to spindle microtubules. msd1 is required for microtubule nucleation from within the mitotic spindle and for localization of Grip71 to centrosomes and mitotic spindle. The protein is Augmin complex subunit msd1 of Drosophila melanogaster (Fruit fly).